We begin with the raw amino-acid sequence, 873 residues long: Bifunctional uridylyltransferase/uridylyl-removing enzyme (873 aa).

The uridylyltransferase stretch occupies residues 1–332 (MPYQCPITFN…NGGQTQEAEI (332 aa)). The tract at residues 333–692 (LDNDFQRRGS…ISKKATRGGT (360 aa)) is uridylyl-removing. Positions 451–573 (VDEHSIRLLK…VRDEESLELL (123 aa)) constitute an HD domain. 2 ACT domains span residues 693 to 777 (EVFV…RTPR) and 800 to 873 (LMEL…ELAP).

It belongs to the GlnD family. Mg(2+) is required as a cofactor.

It catalyses the reaction [protein-PII]-L-tyrosine + UTP = [protein-PII]-uridylyl-L-tyrosine + diphosphate. It carries out the reaction [protein-PII]-uridylyl-L-tyrosine + H2O = [protein-PII]-L-tyrosine + UMP + H(+). Its activity is regulated as follows. Uridylyltransferase (UTase) activity is inhibited by glutamine, while glutamine activates uridylyl-removing (UR) activity. In terms of biological role, modifies, by uridylylation and deuridylylation, the PII regulatory proteins (GlnB and homologs), in response to the nitrogen status of the cell that GlnD senses through the glutamine level. Under low glutamine levels, catalyzes the conversion of the PII proteins and UTP to PII-UMP and PPi, while under higher glutamine levels, GlnD hydrolyzes PII-UMP to PII and UMP (deuridylylation). Thus, controls uridylylation state and activity of the PII proteins, and plays an important role in the regulation of nitrogen assimilation and metabolism. The polypeptide is Bifunctional uridylyltransferase/uridylyl-removing enzyme (Vibrio atlanticus (strain LGP32) (Vibrio splendidus (strain Mel32))).